Here is a 335-residue protein sequence, read N- to C-terminus: Glycerol-3-phosphate dehydrogenase [NAD(P)+] (335 aa).

Residues Ser-12, Trp-13, Arg-33, Arg-34, and Lys-107 each coordinate NADPH. Lys-107, Gly-134, and Ser-136 together coordinate sn-glycerol 3-phosphate. Ala-138 contributes to the NADPH binding site. Sn-glycerol 3-phosphate is bound by residues Lys-189, Asp-242, Ser-252, Arg-253, and Asn-254. Catalysis depends on Lys-189, which acts as the Proton acceptor. Arg-253 serves as a coordination point for NADPH. NADPH-binding residues include Val-277 and Glu-279.

It belongs to the NAD-dependent glycerol-3-phosphate dehydrogenase family.

The protein resides in the cytoplasm. The catalysed reaction is sn-glycerol 3-phosphate + NAD(+) = dihydroxyacetone phosphate + NADH + H(+). It carries out the reaction sn-glycerol 3-phosphate + NADP(+) = dihydroxyacetone phosphate + NADPH + H(+). The protein operates within membrane lipid metabolism; glycerophospholipid metabolism. Functionally, catalyzes the reduction of the glycolytic intermediate dihydroxyacetone phosphate (DHAP) to sn-glycerol 3-phosphate (G3P), the key precursor for phospholipid synthesis. The protein is Glycerol-3-phosphate dehydrogenase [NAD(P)+] of Moorella thermoacetica (strain ATCC 39073 / JCM 9320).